Here is a 506-residue protein sequence, read N- to C-terminus: RNA-splicing ligase RtcB homolog (506 aa).

Mn(2+) is bound by residues aspartate 120, cysteine 123, histidine 228, histidine 260, and histidine 354. Residue 227-231 coordinates GMP; sequence NHYAE. Residues 354–355, 403–406, serine 410, 429–432, and lysine 505 contribute to the GMP site; these read HN, GGSM, and HGAG. The active-site GMP-histidine intermediate is histidine 429.

It belongs to the RtcB family. Catalytic component of the tRNA-splicing ligase complex. Mn(2+) is required as a cofactor.

It catalyses the reaction a 3'-end 3'-phospho-ribonucleotide-RNA + a 5'-end dephospho-ribonucleoside-RNA + GTP = a ribonucleotidyl-ribonucleotide-RNA + GMP + diphosphate. The catalysed reaction is a 3'-end 2',3'-cyclophospho-ribonucleotide-RNA + a 5'-end dephospho-ribonucleoside-RNA + GTP + H2O = a ribonucleotidyl-ribonucleotide-RNA + GMP + diphosphate + H(+). Its function is as follows. Catalytic subunit of the tRNA-splicing ligase complex that acts by directly joining spliced tRNA halves to mature-sized tRNAs by incorporating the precursor-derived splice junction phosphate into the mature tRNA as a canonical 3',5'-phosphodiester. May act as an RNA ligase with broad substrate specificity, and may function toward other RNAs. The sequence is that of RNA-splicing ligase RtcB homolog from Anopheles gambiae (African malaria mosquito).